Consider the following 855-residue polypeptide: Mitochondrial 15S rRNA processing factor CCM1 (855 aa).

Residues 29–61 (PTAMRTRRRTRRHEREPNLRKRQGGSHSNLKEN) are disordered. 3 PPR repeats span residues 234 to 265 (DVDM…MKKL), 317 to 351 (NKVN…SLSH), and 354 to 388 (DVAT…KMEP).

It belongs to the CCM1 family. Binds to mitochondrial small subunit 15S rRNA.

Its subcellular location is the mitochondrion. In terms of biological role, regulates mitochondrial small subunit maturation by controlling 15S rRNA 5'-end processing. Localizes to the 5' precursor of the 15S rRNA in a position that is subsequently occupied by mS47 in the mature yeast mtSSU. Uses structure and sequence-specific RNA recognition, binding to a single-stranded region of the precursor and specifically recognizing bases -6 to -1. The exchange of Ccm1 for mS47 is coupled to the irreversible removal of precursor rRNA that is accompanied by conformational changes of the mitoribosomal proteins uS5m and mS26. These conformational changes signal completion of 5'-end rRNA processing through protection of the mature 5'-end of the 15S rRNA and stabilization of mS47. The removal of the 5' precursor together with the dissociation of Ccm1 may be catalyzed by the 5'-3' exoribonuclease Pet127. Involved in the specific removal of group I introns in mitochondrial encoded transcripts. The polypeptide is Mitochondrial 15S rRNA processing factor CCM1 (CCM1) (Eremothecium gossypii (strain ATCC 10895 / CBS 109.51 / FGSC 9923 / NRRL Y-1056) (Yeast)).